A 353-amino-acid polypeptide reads, in one-letter code: Methionine import ATP-binding protein MetN (353 aa).

An ABC transporter domain is found at 7-249 (LENIDVTFKQ…PKEELSRQFV (243 aa)). 41–48 (GYSGAGKS) contributes to the ATP binding site.

The protein belongs to the ABC transporter superfamily. Methionine importer (TC 3.A.1.24) family. The complex is composed of two ATP-binding proteins (MetN), two transmembrane proteins (MetI) and a solute-binding protein (MetQ).

It localises to the cell membrane. It carries out the reaction L-methionine(out) + ATP + H2O = L-methionine(in) + ADP + phosphate + H(+). The enzyme catalyses D-methionine(out) + ATP + H2O = D-methionine(in) + ADP + phosphate + H(+). In terms of biological role, part of the ABC transporter complex MetNIQ involved in methionine import. Responsible for energy coupling to the transport system. The protein is Methionine import ATP-binding protein MetN of Ligilactobacillus salivarius (strain UCC118) (Lactobacillus salivarius).